The chain runs to 87 residues: uncharacterized protein (87 aa).

Transmembrane regions (helical) follow at residues I8 to L28 and L47 to L67.

The protein resides in the cell membrane. This is an uncharacterized protein from Bacillus subtilis (strain 168).